Reading from the N-terminus, the 384-residue chain is 8-amino-7-oxononanoate synthase (384 aa).

R21 is a binding site for substrate. 108–109 lines the pyridoxal 5'-phosphate pocket; the sequence is GF. H133 serves as a coordination point for substrate. Pyridoxal 5'-phosphate contacts are provided by S179, H207, and T233. N6-(pyridoxal phosphate)lysine is present on K236. T352 contributes to the substrate binding site.

This sequence belongs to the class-II pyridoxal-phosphate-dependent aminotransferase family. BioF subfamily. As to quaternary structure, homodimer. Pyridoxal 5'-phosphate serves as cofactor.

The catalysed reaction is 6-carboxyhexanoyl-[ACP] + L-alanine + H(+) = (8S)-8-amino-7-oxononanoate + holo-[ACP] + CO2. It participates in cofactor biosynthesis; biotin biosynthesis. Functionally, catalyzes the decarboxylative condensation of pimeloyl-[acyl-carrier protein] and L-alanine to produce 8-amino-7-oxononanoate (AON), [acyl-carrier protein], and carbon dioxide. The protein is 8-amino-7-oxononanoate synthase of Escherichia coli (strain UTI89 / UPEC).